The primary structure comprises 432 residues: Phosphomethylpyrimidine synthase (432 aa).

Substrate-binding positions include asparagine 66, methionine 95, tyrosine 124, histidine 163, 185 to 187 (SRG), 226 to 229 (DGLR), and glutamate 265. Zn(2+) is bound at residue histidine 269. Tyrosine 292 is a binding site for substrate. Histidine 333 contacts Zn(2+). The [4Fe-4S] cluster site is built by cysteine 409, cysteine 412, and cysteine 416.

The protein belongs to the ThiC family. Requires [4Fe-4S] cluster as cofactor.

It carries out the reaction 5-amino-1-(5-phospho-beta-D-ribosyl)imidazole + S-adenosyl-L-methionine = 4-amino-2-methyl-5-(phosphooxymethyl)pyrimidine + CO + 5'-deoxyadenosine + formate + L-methionine + 3 H(+). It participates in cofactor biosynthesis; thiamine diphosphate biosynthesis. Functionally, catalyzes the synthesis of the hydroxymethylpyrimidine phosphate (HMP-P) moiety of thiamine from aminoimidazole ribotide (AIR) in a radical S-adenosyl-L-methionine (SAM)-dependent reaction. This is Phosphomethylpyrimidine synthase from Caldanaerobacter subterraneus subsp. tengcongensis (strain DSM 15242 / JCM 11007 / NBRC 100824 / MB4) (Thermoanaerobacter tengcongensis).